An 812-amino-acid polypeptide reads, in one-letter code: cAMP-regulated phosphoprotein 21 (812 aa).

The tract at residues 1-130 (MSEQGDLNQA…KDKTSEKPKI (130 aa)) is disordered. N-acetylserine is present on Ser2. Low complexity predominate over residues 9-25 (QAIAEEGGTEQETATPE). Positions 32–58 (ESLDEEEKLELQRRLEAQNQERRKSKS) form a coiled coil. Ser33 carries the post-translational modification Phosphoserine. Residues 40–53 (LELQRRLEAQNQER) show a composition bias toward basic and acidic residues. Ser56 carries the phosphoserine modification. Over residues 90-100 (IHLQLSSFSSL) the composition is skewed to low complexity. The segment covering 102-130 (EEDKSRKDDSEREKEKDKNKDKTSEKPKI) has biased composition (basic and acidic residues). The residue at position 134 (Ser134) is a Phosphoserine. One can recognise an R3H domain in the interval 164-227 (RMILLKMEQE…SVIINKTSST (64 aa)). The 73-residue stretch at 228–300 (RIPEQRFCEH…VRERIFAHDS (73 aa)) folds into the SUZ domain. Residues 246–281 (SQKRFILKRDNSSIDKEDNQQNRMHPFRDDRRSKSI) form a disordered region. Phosphoserine is present on Ser300. Disordered stretches follow at residues 332–436 (RGNR…PLVS), 485–544 (HTGQ…MAGP), and 561–632 (LSRQ…QQPP). Low complexity predominate over residues 339–349 (GRTSGSRQSSS). Over residues 351 to 360 (NELKWSDHQR) the composition is skewed to basic and acidic residues. Over residues 361 to 373 (AWSSTDSDSSNRN) the composition is skewed to polar residues. Phosphoserine is present on residues Ser363 and Ser383. Low complexity predominate over residues 391-423 (TRGDSTSSTRSTGKLSKAGSESSSSAGSSGSLS). Ser562 carries the phosphoserine modification. The segment covering 582 to 602 (LMPQPAQQPSYVIASTGQQLP) has biased composition (polar residues). Residues 619-632 (QPPPSPQGFVQQPP) show a composition bias toward pro residues. Arg655 is modified (asymmetric dimethylarginine).

As to quaternary structure, interacts with CALM1. Post-translationally, phosphorylation at Ser-56 favors interaction with CALM1. Isoform 1 is methylated by CARM1 at Arg-655 in immature thymocytes. Isoform 2 is expressed in brain. Isoform 1 is present in immature thymocytes (at protein level).

The protein localises to the cytoplasm. Isoform 2 may act as a competitive inhibitor of calmodulin-dependent enzymes such as calcineurin in neurons. This chain is cAMP-regulated phosphoprotein 21 (ARPP21), found in Homo sapiens (Human).